The following is a 78-amino-acid chain: Large ribosomal subunit protein bL28 (78 aa).

Residues 1 to 24 (MSRVCQVTGKRPAVGNNRSHANNA) form a disordered region.

The protein belongs to the bacterial ribosomal protein bL28 family.

In Aeromonas salmonicida (strain A449), this protein is Large ribosomal subunit protein bL28.